Reading from the N-terminus, the 775-residue chain is Kazrin (775 aa).

Residues 38–66 (AELSGGGGPGPGPGAAASASAAGDSAATN) form a disordered region. The span at 51-64 (GAAASASAAGDSAA) shows a compositional bias: low complexity. The stretch at 74–256 (AQVLLREEVS…LATLTKDVPK (183 aa)) forms a coiled coil. Positions 174 to 333 (RDFIRNYEQH…SAAEGDRSST (160 aa)) are interaction with PPL. The interval 290 to 427 (QQTLYHSHPP…QSLSLSEGEE (138 aa)) is disordered. A phosphoserine mark is found at S352, S367, and S387. A compositionally biased stretch (polar residues) spans 411-422 (SQCSPTRQSLSL). SAM domains lie at 446–511 (WKAG…YRDA), 524–588 (DHHW…LYQV), and 612–679 (WTNQ…SAVF). Disordered regions lie at residues 688–715 (REAERFGTPPGRASSVTRAGKEENSSGL) and 729–762 (RGFSSKDPDFHDDYGSLQNEDCGDDDPQSRLEQC). Basic and acidic residues predominate over residues 732–742 (SSKDPDFHDDY).

Belongs to the kazrin family. Isoform 2, isoform 3 and isoform 4 interact with PPL N-terminus. Isoform 2, isoform 3 and isoform 4 are expressed in several cell lines including keratinocytes and bladder and epidermoid carcinoma (at protein level). Isoform 2, isoform 3 and isoform 4 are expressed in hair follicle and interfollicular epidermis (at protein level).

It is found in the cytoplasm. It localises to the cytoskeleton. The protein localises to the cell junction. The protein resides in the desmosome. Its subcellular location is the nucleus. Component of the cornified envelope of keratinocytes. May be involved in the interplay between adherens junctions and desmosomes. The function in the nucleus is not known. The chain is Kazrin from Homo sapiens (Human).